Consider the following 328-residue polypeptide: Methionyl-tRNA formyltransferase (328 aa).

110-113 (SLLP) serves as a coordination point for (6S)-5,6,7,8-tetrahydrofolate.

This sequence belongs to the Fmt family.

The catalysed reaction is L-methionyl-tRNA(fMet) + (6R)-10-formyltetrahydrofolate = N-formyl-L-methionyl-tRNA(fMet) + (6S)-5,6,7,8-tetrahydrofolate + H(+). In terms of biological role, attaches a formyl group to the free amino group of methionyl-tRNA(fMet). The formyl group appears to play a dual role in the initiator identity of N-formylmethionyl-tRNA by promoting its recognition by IF2 and preventing the misappropriation of this tRNA by the elongation apparatus. In Prochlorococcus marinus subsp. pastoris (strain CCMP1986 / NIES-2087 / MED4), this protein is Methionyl-tRNA formyltransferase.